Consider the following 123-residue polypeptide: Small ribosomal subunit protein uS13 (123 aa).

A disordered region spans residues 96–123 (GLPVRGQRTKTNARTRKGPKKTVAGKKK).

Belongs to the universal ribosomal protein uS13 family. Part of the 30S ribosomal subunit. Forms a loose heterodimer with protein S19. Forms two bridges to the 50S subunit in the 70S ribosome.

Its function is as follows. Located at the top of the head of the 30S subunit, it contacts several helices of the 16S rRNA. In the 70S ribosome it contacts the 23S rRNA (bridge B1a) and protein L5 of the 50S subunit (bridge B1b), connecting the 2 subunits; these bridges are implicated in subunit movement. Contacts the tRNAs in the A and P-sites. This Nocardia farcinica (strain IFM 10152) protein is Small ribosomal subunit protein uS13.